We begin with the raw amino-acid sequence, 869 residues long: Facilitated trehalose transporter Tret1 (869 aa).

Disordered regions lie at residues 1 to 214 and 258 to 315; these read MSGR…QKAT and KESS…LIHR. Residues 1–404 lie on the Cytoplasmic side of the membrane; it reads MSGRDNRGAG…VYRPTTNPIY (404 aa). Over residues 25–43 the composition is skewed to basic and acidic residues; it reads KLKEKLTRAGDDQGYHRVE. 3 stretches are compositionally biased toward low complexity: residues 44 to 57, 79 to 92, and 118 to 127; these read SNLS…SLDT, PQQQ…QQLR, and PFQQQQQRTP. 2 stretches are compositionally biased toward basic and acidic residues: residues 147-156 and 258-291; these read EIREHRDRQQ and KESS…KLDK. A phosphoserine mark is found at Ser-260, Ser-261, Ser-262, Ser-332, and Ser-334. Residues 336 to 368 are disordered; that stretch reads EDFHTSRQHFQQQRSISTDSRKSRRPYEMDEMG. The segment covering 343-353 has biased composition (polar residues); that stretch reads QHFQQQRSIST. A compositionally biased stretch (basic and acidic residues) spans 354–368; sequence DSRKSRRPYEMDEMG. The chain crosses the membrane as a helical span at residues 405–425; it reads IWTQVLAALSVSLGSLVVGFV. Over 426–452 the chain is Extracellular; the sequence is SAYTSPALVSMTNRNMTSFEVTPQAAS. Asn-440 carries an N-linked (GlcNAc...) asparagine glycan. The chain crosses the membrane as a helical span at residues 453 to 473; the sequence is WVGGIMPLAGLAGGIAGGPFI. The Cytoplasmic segment spans residues 474–485; that stretch reads EYLGRRNTILAT. A helical transmembrane segment spans residues 486–506; that stretch reads AIPFIVSSLLIACAVNVAMVL. The Extracellular portion of the chain corresponds to 507-509; sequence AGR. A helical transmembrane segment spans residues 510–530; that stretch reads FLAGFCVGIASLSLPVYLGET. At 531-536 the chain is on the cytoplasmic side; the sequence is VQPEVR. A helical transmembrane segment spans residues 537 to 557; that stretch reads GTLGLLPTAFGNIGILLCFVA. Over 558-564 the chain is Extracellular; that stretch reads GTYMDWS. A helical membrane pass occupies residues 565–585; that stretch reads MLAFLGAALPVPFLILMFLIP. Topologically, residues 586-654 are cytoplasmic; that stretch reads ETPRWFVSRG…NLKPLSISLG (69 aa). The helical transmembrane segment at 655–675 threads the bilayer; the sequence is LMFFQQLSGINAVIFYTVSIF. At 676–685 the chain is on the extracellular side; it reads KDAGSTIDGN. A helical transmembrane segment spans residues 686–706; the sequence is LCTIIVGIVNFMATFIATLLI. Residues 707–712 are Cytoplasmic-facing; sequence DRAGRK. Residues 713–733 form a helical membrane-spanning segment; the sequence is ILLYVSNIAMIITLFVLGGFF. Over 734-752 the chain is Extracellular; the sequence is YCKSHGQDVSQLGWLPLSC. The chain crosses the membrane as a helical span at residues 753–773; sequence FVIYILGFSLGFGPIPWLMMG. The Cytoplasmic portion of the chain corresponds to 774 to 779; that stretch reads EILPSK. A helical transmembrane segment spans residues 780–800; that stretch reads IRGSAASVATAFNWSCTFVVT. The Extracellular segment spans residues 801–813; sequence KTFQDMIDFMGAH. The chain crosses the membrane as a helical span at residues 814–834; it reads GAFWLFGSICFIGLFFVILYV. Over 835 to 869 the chain is Cytoplasmic; sequence PETQGKTLEDIERKMMGRVRRMSSVANMKPLAFNM. A phosphoserine mark is found at Ser-857 and Ser-858.

This sequence belongs to the major facilitator superfamily. Sugar transporter (TC 2.A.1.1) family. Trehalose transporter subfamily.

The protein resides in the cell membrane. Functionally, low-capacity facilitative transporter for trehalose. Does not transport maltose, sucrose or lactose. Mediates the bidirectional transfer of trehalose. Responsible for the transport of trehalose synthesized in the fat body and the incorporation of trehalose into other tissues that require a carbon source, thereby regulating trehalose levels in the hemolymph. In Drosophila persimilis (Fruit fly), this protein is Facilitated trehalose transporter Tret1.